Here is a 311-residue protein sequence, read N- to C-terminus: Oxidoreductase NAD-binding domain-containing protein 1 (311 aa).

A signal peptide spans 1–17 (MACAAVMIPGLLRCSVG). Residues 50–186 (HMERTASVLR…GGVGINPLLS (137 aa)) form the FAD-binding FR-type domain. 178–183 (GVGINP) provides a ligand contact to NAD(+).

This chain is Oxidoreductase NAD-binding domain-containing protein 1 (OXNAD1), found in Pongo abelii (Sumatran orangutan).